The primary structure comprises 680 residues: UvrABC system protein B (680 aa).

Positions Ala-27–Glu-422 constitute a Helicase ATP-binding domain. Gly-40 to Thr-47 provides a ligand contact to ATP. Positions Tyr-93–Ile-116 match the Beta-hairpin motif. Residues Gln-443–Ser-609 form the Helicase C-terminal domain. Residues Pro-641–Arg-676 form the UVR domain.

This sequence belongs to the UvrB family. In terms of assembly, forms a heterotetramer with UvrA during the search for lesions. Interacts with UvrC in an incision complex.

The protein localises to the cytoplasm. The UvrABC repair system catalyzes the recognition and processing of DNA lesions. A damage recognition complex composed of 2 UvrA and 2 UvrB subunits scans DNA for abnormalities. Upon binding of the UvrA(2)B(2) complex to a putative damaged site, the DNA wraps around one UvrB monomer. DNA wrap is dependent on ATP binding by UvrB and probably causes local melting of the DNA helix, facilitating insertion of UvrB beta-hairpin between the DNA strands. Then UvrB probes one DNA strand for the presence of a lesion. If a lesion is found the UvrA subunits dissociate and the UvrB-DNA preincision complex is formed. This complex is subsequently bound by UvrC and the second UvrB is released. If no lesion is found, the DNA wraps around the other UvrB subunit that will check the other stand for damage. The polypeptide is UvrABC system protein B (Gloeobacter violaceus (strain ATCC 29082 / PCC 7421)).